A 196-amino-acid chain; its full sequence is Large ribosomal subunit protein bL9 (196 aa).

Residues 172–196 form a disordered region; that stretch reads NESARPEAFFDPEAEIEQEEGEENA. Residues 181 to 196 show a composition bias toward acidic residues; it reads FDPEAEIEQEEGEENA.

It belongs to the bacterial ribosomal protein bL9 family.

Functionally, binds to the 23S rRNA. The chain is Large ribosomal subunit protein bL9 from Chelativorans sp. (strain BNC1).